The primary structure comprises 874 residues: Probable inorganic carbon transporter subunit DabA (874 aa).

Zn(2+) contacts are provided by C398, D400, H580, and C595.

The protein belongs to the inorganic carbon transporter (TC 9.A.2) DabA family. As to quaternary structure, forms a complex with DabB. The cofactor is Zn(2+).

It localises to the cell membrane. Part of an energy-coupled inorganic carbon pump. The polypeptide is Probable inorganic carbon transporter subunit DabA (Bacillus cereus (strain Q1)).